The primary structure comprises 248 residues: Ubiquinone/menaquinone biosynthesis C-methyltransferase UbiE (248 aa).

Residues Ser-68 and Asp-92 each coordinate S-adenosyl-L-methionine.

It belongs to the class I-like SAM-binding methyltransferase superfamily. MenG/UbiE family.

The catalysed reaction is a 2-demethylmenaquinol + S-adenosyl-L-methionine = a menaquinol + S-adenosyl-L-homocysteine + H(+). The enzyme catalyses a 2-methoxy-6-(all-trans-polyprenyl)benzene-1,4-diol + S-adenosyl-L-methionine = a 5-methoxy-2-methyl-3-(all-trans-polyprenyl)benzene-1,4-diol + S-adenosyl-L-homocysteine + H(+). The protein operates within quinol/quinone metabolism; menaquinone biosynthesis; menaquinol from 1,4-dihydroxy-2-naphthoate: step 2/2. Its pathway is cofactor biosynthesis; ubiquinone biosynthesis. In terms of biological role, methyltransferase required for the conversion of demethylmenaquinol (DMKH2) to menaquinol (MKH2) and the conversion of 2-polyprenyl-6-methoxy-1,4-benzoquinol (DDMQH2) to 2-polyprenyl-3-methyl-6-methoxy-1,4-benzoquinol (DMQH2). The protein is Ubiquinone/menaquinone biosynthesis C-methyltransferase UbiE of Rickettsia felis (strain ATCC VR-1525 / URRWXCal2) (Rickettsia azadi).